A 438-amino-acid polypeptide reads, in one-letter code: Protein phosphatase 2C homolog 2 (438 aa).

A PPM-type phosphatase domain is found at Ile23–Phe294. Residues Asp67, Gly68, Asp236, and Asp285 each coordinate Mn(2+). A disordered region spans residues Val370–Asp438. Acidic residues predominate over residues Asp375 to Lys387. The segment covering Gly398–Asp438 has biased composition (basic and acidic residues).

It belongs to the PP2C family. Mg(2+) serves as cofactor. The cofactor is Mn(2+).

The protein localises to the cytoplasm. It localises to the nucleus. It catalyses the reaction O-phospho-L-seryl-[protein] + H2O = L-seryl-[protein] + phosphate. It carries out the reaction O-phospho-L-threonyl-[protein] + H2O = L-threonyl-[protein] + phosphate. In terms of biological role, dephosphorylating regulator for many key proteins. Negatively regulates the endoplasmic reticulum unfolded protein response. The polypeptide is Protein phosphatase 2C homolog 2 (Hypocrea jecorina (strain QM6a) (Trichoderma reesei)).